Reading from the N-terminus, the 109-residue chain is Antifungal protein ginkbilobin-like protein (109 aa).

The Gnk2-homologous domain maps to 4–109 (TNFVSSACNT…CFIQYEQHSF (106 aa)). Intrachain disulfides connect cysteine 11–cysteine 87, cysteine 63–cysteine 72, and cysteine 75–cysteine 100. Alpha-D-mannopyranose is bound at residue asparagine 12. Alpha-D-mannopyranose contacts are provided by arginine 94 and glutamate 105.

Its function is as follows. Exerts antifungal activity through its carbohydrate-binding specificity. The chain is Antifungal protein ginkbilobin-like protein from Picea abies (Norway spruce).